Here is a 404-residue protein sequence, read N- to C-terminus: Cysteine desulfurase IscS (404 aa).

Residues A75–T76, N155, Q183, and S203–H205 each bind pyridoxal 5'-phosphate. K206 bears the N6-(pyridoxal phosphate)lysine mark. T243 is a binding site for pyridoxal 5'-phosphate. C328 functions as the Cysteine persulfide intermediate in the catalytic mechanism. C328 lines the [2Fe-2S] cluster pocket.

Belongs to the class-V pyridoxal-phosphate-dependent aminotransferase family. NifS/IscS subfamily. In terms of assembly, homodimer. Forms a heterotetramer with IscU, interacts with other sulfur acceptors. Pyridoxal 5'-phosphate is required as a cofactor.

It is found in the cytoplasm. It carries out the reaction (sulfur carrier)-H + L-cysteine = (sulfur carrier)-SH + L-alanine. Its pathway is cofactor biosynthesis; iron-sulfur cluster biosynthesis. Master enzyme that delivers sulfur to a number of partners involved in Fe-S cluster assembly, tRNA modification or cofactor biosynthesis. Catalyzes the removal of elemental sulfur atoms from cysteine to produce alanine. Functions as a sulfur delivery protein for Fe-S cluster synthesis onto IscU, an Fe-S scaffold assembly protein, as well as other S acceptor proteins. This Buchnera aphidicola subsp. Acyrthosiphon pisum (strain 5A) protein is Cysteine desulfurase IscS.